The primary structure comprises 90 residues: Probable Fe(2+)-trafficking protein (90 aa).

Belongs to the Fe(2+)-trafficking protein family.

Functionally, could be a mediator in iron transactions between iron acquisition and iron-requiring processes, such as synthesis and/or repair of Fe-S clusters in biosynthetic enzymes. In Colwellia psychrerythraea (strain 34H / ATCC BAA-681) (Vibrio psychroerythus), this protein is Probable Fe(2+)-trafficking protein.